Here is a 429-residue protein sequence, read N- to C-terminus: Multifunctional CCA protein (429 aa).

ATP contacts are provided by Gly-27 and Arg-30. CTP-binding residues include Gly-27 and Arg-30. Mg(2+) is bound by residues Asp-40 and Asp-42. The ATP site is built by Arg-110, Arg-162, and Arg-165. Arg-110, Arg-162, and Arg-165 together coordinate CTP. An HD domain is found at 251 to 352; it reads TGVHTMMVVD…VRLLERCDAL (102 aa).

It belongs to the tRNA nucleotidyltransferase/poly(A) polymerase family. Bacterial CCA-adding enzyme type 1 subfamily. As to quaternary structure, monomer. Can also form homodimers and oligomers. Mg(2+) is required as a cofactor. The cofactor is Ni(2+).

It catalyses the reaction a tRNA precursor + 2 CTP + ATP = a tRNA with a 3' CCA end + 3 diphosphate. It carries out the reaction a tRNA with a 3' CCA end + 2 CTP + ATP = a tRNA with a 3' CCACCA end + 3 diphosphate. In terms of biological role, catalyzes the addition and repair of the essential 3'-terminal CCA sequence in tRNAs without using a nucleic acid template. Adds these three nucleotides in the order of C, C, and A to the tRNA nucleotide-73, using CTP and ATP as substrates and producing inorganic pyrophosphate. tRNA 3'-terminal CCA addition is required both for tRNA processing and repair. Also involved in tRNA surveillance by mediating tandem CCA addition to generate a CCACCA at the 3' terminus of unstable tRNAs. While stable tRNAs receive only 3'-terminal CCA, unstable tRNAs are marked with CCACCA and rapidly degraded. This Ralstonia nicotianae (strain ATCC BAA-1114 / GMI1000) (Ralstonia solanacearum) protein is Multifunctional CCA protein.